The following is an 807-amino-acid chain: Ribosome biogenesis protein ERB1 (807 aa).

Positions 1-112 (MMAKNNKTTE…DTTSLTDRLS (112 aa)) are disordered. Acidic residues-rich tracts occupy residues 21–30 (EESDVEEDED) and 42–56 (EASE…YESA). Serine 23 carries the post-translational modification Phosphoserine. Residues 57-69 (VEEKESSSDKEAQ) show a composition bias toward basic and acidic residues. A phosphoserine mark is found at serine 72 and serine 76. The span at 86 to 102 (EEEGDEEEDYDSSEFSD) shows a compositional bias: acidic residues. A Glycyl lysine isopeptide (Lys-Gly) (interchain with G-Cter in ubiquitin) cross-link involves residue lysine 127. Serine 146 and serine 149 each carry phosphoserine. A required for interaction with NOP7 region spans residues 265-383 (RFVPSKNEAK…LRKVPGYGES (119 aa)). The tract at residues 383-419 (SIRERFERSLDLYLAPRVRKNKLNIDPNSLIPELPSP) is required for interaction with YTM1. Residue serine 418 is modified to Phosphoserine. WD repeat units lie at residues 435 to 474 (GHKG…EVYR), 483 to 523 (NPDD…YDIE), 592 to 634 (SCKK…TQSP), 637 to 675 (KSKG…LVKK), 678 to 717 (PGAR…TPYK), 721 to 760 (YHEK…DMMK), and 776 to 807 (INSL…LWTT).

It belongs to the WD repeat BOP1/ERB1 family. Component of the NOP7 complex, composed of ERB1, NOP7 and YTM1. The complex is held together by ERB1, which interacts with NOP7 via its N-terminal domain and with YTM1 via a high-affinity interaction between the seven-bladed beta-propeller domains of the 2 proteins. The NOP7 complex associates with the 66S pre-ribosome.

Its subcellular location is the nucleus. It localises to the nucleolus. The protein localises to the nucleoplasm. Component of the NOP7 complex, which is required for maturation of the 25S and 5.8S ribosomal RNAs and formation of the 60S ribosome. The sequence is that of Ribosome biogenesis protein ERB1 from Saccharomyces cerevisiae (strain YJM789) (Baker's yeast).